The chain runs to 558 residues: Arginine--tRNA ligase (558 aa).

Positions 119-129 (PNIAKPMSMGH) match the 'HIGH' region motif.

The protein belongs to the class-I aminoacyl-tRNA synthetase family. As to quaternary structure, monomer.

It localises to the cytoplasm. It carries out the reaction tRNA(Arg) + L-arginine + ATP = L-arginyl-tRNA(Arg) + AMP + diphosphate. The sequence is that of Arginine--tRNA ligase from Lactobacillus johnsonii (strain CNCM I-12250 / La1 / NCC 533).